Consider the following 496-residue polypeptide: Alanine aminotransferase 1 (496 aa).

Ala-2 is modified (N-acetylalanine). Thr-22 is subject to Phosphothreonine. Lys-314 carries the N6-(pyridoxal phosphate)lysine modification.

This sequence belongs to the class-I pyridoxal-phosphate-dependent aminotransferase family. Alanine aminotransferase subfamily. As to quaternary structure, homodimer. Requires pyridoxal 5'-phosphate as cofactor. In terms of tissue distribution, liver, heart, skeletal muscle, etc.

It is found in the cytoplasm. The catalysed reaction is L-alanine + 2-oxoglutarate = pyruvate + L-glutamate. Its pathway is amino-acid degradation; L-alanine degradation via transaminase pathway; pyruvate from L-alanine: step 1/1. Functionally, catalyzes the reversible transamination between alanine and 2-oxoglutarate to form pyruvate and glutamate. Participates in cellular nitrogen metabolism and also in liver gluconeogenesis starting with precursors transported from skeletal muscles. The chain is Alanine aminotransferase 1 (Gpt) from Rattus norvegicus (Rat).